Reading from the N-terminus, the 364-residue chain is NADH-quinone oxidoreductase subunit H (364 aa).

8 helical membrane-spanning segments follow: residues 15-35 (LLVLGQIGLFTLVLLLSIAFL), 84-104 (AVFILAPILTCTLAFVTWAAI), 123-143 (VGVLYLFAISSLGVYGIIMGG), 169-189 (IGFVIVTVILLVGSMNLTTIV), 206-226 (YFPLIVVMVPMFVIFFISALA), 257-277 (LFMLGEYLNIVLMCAMMTILF), 302-322 (LSGLAWFMGKVLFCFFLFALV), and 341-361 (IFLPTSLAAVIIVAGYVTFVG).

It belongs to the complex I subunit 1 family. NDH-1 is composed of 14 different subunits. Subunits NuoA, H, J, K, L, M, N constitute the membrane sector of the complex.

It is found in the cell inner membrane. The enzyme catalyses a quinone + NADH + 5 H(+)(in) = a quinol + NAD(+) + 4 H(+)(out). Its function is as follows. NDH-1 shuttles electrons from NADH, via FMN and iron-sulfur (Fe-S) centers, to quinones in the respiratory chain. The immediate electron acceptor for the enzyme in this species is believed to be ubiquinone. Couples the redox reaction to proton translocation (for every two electrons transferred, four hydrogen ions are translocated across the cytoplasmic membrane), and thus conserves the redox energy in a proton gradient. This subunit may bind ubiquinone. The sequence is that of NADH-quinone oxidoreductase subunit H from Hyphomonas neptunium (strain ATCC 15444).